Reading from the N-terminus, the 189-residue chain is Flavin prenyltransferase UbiX (189 aa).

Residues 10 to 12 (GAS), Ser-37, 88 to 91 (SIKT), and Arg-123 each bind FMN. 2 residues coordinate dimethylallyl phosphate: Tyr-153 and Arg-169.

The protein belongs to the UbiX/PAD1 family.

The enzyme catalyses dimethylallyl phosphate + FMNH2 = prenylated FMNH2 + phosphate. Its pathway is cofactor biosynthesis; ubiquinone biosynthesis. Its function is as follows. Flavin prenyltransferase that catalyzes the synthesis of the prenylated FMN cofactor (prenyl-FMN) for 4-hydroxy-3-polyprenylbenzoic acid decarboxylase UbiD. The prenyltransferase is metal-independent and links a dimethylallyl moiety from dimethylallyl monophosphate (DMAP) to the flavin N5 and C6 atoms of FMN. This is Flavin prenyltransferase UbiX from Salmonella typhi.